Here is a 308-residue protein sequence, read N- to C-terminus: Ornithine carbamoyltransferase (308 aa).

Carbamoyl phosphate contacts are provided by residues 57-60 (STRT), Q84, R108, and 135-138 (HPCQ). L-ornithine contacts are provided by residues N166, D224, and 228–229 (SM). Residues 264–265 (CL) and R292 contribute to the carbamoyl phosphate site.

It belongs to the aspartate/ornithine carbamoyltransferase superfamily. OTCase family.

The protein resides in the cytoplasm. The enzyme catalyses carbamoyl phosphate + L-ornithine = L-citrulline + phosphate + H(+). Its pathway is amino-acid degradation; L-arginine degradation via ADI pathway; carbamoyl phosphate from L-arginine: step 2/2. Functionally, reversibly catalyzes the transfer of the carbamoyl group from carbamoyl phosphate (CP) to the N(epsilon) atom of ornithine (ORN) to produce L-citrulline. The chain is Ornithine carbamoyltransferase from Ralstonia pickettii (strain 12J).